A 138-amino-acid polypeptide reads, in one-letter code: Small ribosomal subunit protein uS11c (138 aa).

The tract at residues 1 to 22 (MAKPIPKIGSRKNARSGSRKHL) is disordered. A compositionally biased stretch (basic residues) spans 9-22 (GSRKNARSGSRKHL).

The protein belongs to the universal ribosomal protein uS11 family. Part of the 30S ribosomal subunit.

Its subcellular location is the plastid. The protein resides in the chloroplast. This is Small ribosomal subunit protein uS11c from Lotus japonicus (Lotus corniculatus var. japonicus).